A 235-amino-acid polypeptide reads, in one-letter code: Motile sperm domain-containing protein 3 (235 aa).

Disordered regions lie at residues 1–25 (MRRG…RGAP) and 143–171 (ELQG…FQEH). In terms of domain architecture, MSP spans 33–145 (PVLVFPPDLV…RAPAYPLELQ (113 aa)). The span at 149 to 164 (DPAPRPGPPAGTPPPT) shows a compositional bias: pro residues. The next 2 membrane-spanning stretches (helical) occupy residues 180–200 (SFLL…LPLP) and 213–233 (VSLG…MVFL).

It localises to the membrane. The polypeptide is Motile sperm domain-containing protein 3 (MOSPD3) (Homo sapiens (Human)).